A 660-amino-acid chain; its full sequence is tRNA 5-methylaminomethyl-2-thiouridine biosynthesis bifunctional protein MnmC (660 aa).

A tRNA (mnm(5)s(2)U34)-methyltransferase region spans residues 1-242; that stretch reads MTDRIVPATL…KRAMLVGEFA (242 aa). The tract at residues 266–660 is FAD-dependent cmnm(5)s(2)U34 oxidoreductase; the sequence is IGAGLAGCAV…VRALRHGRVA (395 aa).

In the N-terminal section; belongs to the methyltransferase superfamily. tRNA (mnm(5)s(2)U34)-methyltransferase family. The protein in the C-terminal section; belongs to the DAO family. It depends on FAD as a cofactor.

Its subcellular location is the cytoplasm. The catalysed reaction is 5-aminomethyl-2-thiouridine(34) in tRNA + S-adenosyl-L-methionine = 5-methylaminomethyl-2-thiouridine(34) in tRNA + S-adenosyl-L-homocysteine + H(+). Functionally, catalyzes the last two steps in the biosynthesis of 5-methylaminomethyl-2-thiouridine (mnm(5)s(2)U) at the wobble position (U34) in tRNA. Catalyzes the FAD-dependent demodification of cmnm(5)s(2)U34 to nm(5)s(2)U34, followed by the transfer of a methyl group from S-adenosyl-L-methionine to nm(5)s(2)U34, to form mnm(5)s(2)U34. The polypeptide is tRNA 5-methylaminomethyl-2-thiouridine biosynthesis bifunctional protein MnmC (Burkholderia pseudomallei (strain K96243)).